Here is a 150-residue protein sequence, read N- to C-terminus: UPF0756 membrane protein CGSHiEE_06715 (150 aa).

4 consecutive transmembrane segments (helical) span residues 1 to 21 (MTLQ…LGVL), 52 to 72 (YGVK…LVSG), 81 to 101 (GFVS…AWLA), and 123 to 143 (IIGV…AGIL).

The protein belongs to the UPF0756 family.

Its subcellular location is the cell membrane. This Haemophilus influenzae (strain PittEE) protein is UPF0756 membrane protein CGSHiEE_06715.